The following is a 507-amino-acid chain: Arabinose import ATP-binding protein AraG (507 aa).

ABC transporter domains follow at residues Leu14–Arg249 and Arg249–Thr505. An ATP-binding site is contributed by Gly46–Ser53.

Belongs to the ABC transporter superfamily. Arabinose importer (TC 3.A.1.2.2) family. As to quaternary structure, the complex is composed of two ATP-binding proteins (AraG), two transmembrane proteins (AraH) and a solute-binding protein (AraF).

The protein resides in the cell inner membrane. The catalysed reaction is L-arabinose(out) + ATP + H2O = L-arabinose(in) + ADP + phosphate + H(+). Part of the ABC transporter complex AraFGH involved in arabinose import. Responsible for energy coupling to the transport system. The chain is Arabinose import ATP-binding protein AraG from Pseudomonas syringae pv. tomato (strain ATCC BAA-871 / DC3000).